A 328-amino-acid chain; its full sequence is Ribosomal RNA large subunit methyltransferase F (328 aa).

The interval 1-31 (MTDTRKPPRKKPQRPAKPAAPREKATLHPRN) is disordered.

This sequence belongs to the methyltransferase superfamily. METTL16/RlmF family.

It localises to the cytoplasm. It catalyses the reaction adenosine(1618) in 23S rRNA + S-adenosyl-L-methionine = N(6)-methyladenosine(1618) in 23S rRNA + S-adenosyl-L-homocysteine + H(+). Functionally, specifically methylates the adenine in position 1618 of 23S rRNA. This Pseudomonas savastanoi pv. phaseolicola (strain 1448A / Race 6) (Pseudomonas syringae pv. phaseolicola (strain 1448A / Race 6)) protein is Ribosomal RNA large subunit methyltransferase F.